The following is a 528-amino-acid chain: Dihydromonacolin L monooxygenase LovA (528 aa).

Topologically, residues Met1–His23 are cytoplasmic. Residues Gly24–Leu44 traverse the membrane as a helical; Signal-anchor for type II membrane protein segment. Topologically, residues Cys45–Leu528 are lumenal. Heme is bound at residue Cys465.

It belongs to the cytochrome P450 family. It depends on heme as a cofactor.

Its subcellular location is the membrane. It is found in the endoplasmic reticulum membrane. It catalyses the reaction dihydromonacolin L carboxylate + reduced [NADPH--hemoprotein reductase] + O2 = monacolin L carboxylate + oxidized [NADPH--hemoprotein reductase] + 2 H2O + H(+). It carries out the reaction monacolin L carboxylate + reduced [NADPH--hemoprotein reductase] + O2 = monacolin J carboxylate + oxidized [NADPH--hemoprotein reductase] + H2O + H(+). It participates in polyketide biosynthesis; lovastatin biosynthesis. In terms of biological role, dihydromonacolin L monooxygenase; part of the gene cluster that mediates the biosynthesis of lovastatin (also known as mevinolin, mevacor or monacolin K), a hypolipidemic inhibitor of (3S)-hydroxymethylglutaryl-coenzyme A (HMG-CoA) reductase (HMGR). The first step in the biosynthesis of lovastatin is the production of dihydromonacolin L acid by the lovastatin nonaketide synthase lovB and the trans-acting enoyl reductase lovC via condensation of one acetyl-CoA unit and 8 malonyl-CoA units. Dihydromonacolin L acid is released from lovB by the thioesterase lovG. Next, dihydromonacolin L acid is oxidized by the dihydromonacolin L monooxygenase lovA twice to form monacolin J acid. The 2-methylbutyrate moiety of lovastatin is synthesized by the lovastatin diketide synthase lovF via condensation of one acetyl-CoA unit and one malonyl-CoA unit. Finally, the covalent attachment of this moiety to monacolin J acid is catalyzed by the transesterase lovD to yield lovastatin. LovD has broad substrate specificity and can also convert monacolin J to simvastatin using alpha-dimethylbutanoyl-S-methyl-3-mercaptopropionate (DMB-S-MMP) as the thioester acyl donor, and can also catalyze the reverse reaction and function as hydrolase in vitro. LovD has much higher activity with LovF-bound 2-methylbutanoate than with free diketide substrates. This is Dihydromonacolin L monooxygenase LovA from Aspergillus terreus.